A 295-amino-acid polypeptide reads, in one-letter code: Small ribosomal subunit protein uS2 (295 aa).

Belongs to the universal ribosomal protein uS2 family. As to quaternary structure, component of the small ribosomal subunit. Mature ribosomes consist of a small (40S) and a large (60S) subunit. The 40S subunit contains about 33 different proteins and 1 molecule of RNA (18S). The 60S subunit contains about 49 different proteins and 3 molecules of RNA (25S, 5.8S and 5S). Interacts with RPS21.

Its subcellular location is the cytoplasm. In terms of biological role, required for the assembly and/or stability of the 40S ribosomal subunit. Required for the processing of the 20S rRNA-precursor to mature 18S rRNA in a late step of the maturation of 40S ribosomal subunits. The protein is Small ribosomal subunit protein uS2 of Paracoccidioides brasiliensis (strain Pb18).